Consider the following 453-residue polypeptide: MINNLSISMTKVIKIILAIIIILFNTLSIFANTTTLSPIKITKGNCTQIPIAINFFAAKSNEEHGLSQNIVSIISNDLNISKIFAPISSDLFIETEQGVAHIPLFTAWSQINANILINGEITKIDSTDFKVTFVVWDVFSAKEITRKSFTFPSQLWRSTAHKIADQIYKHVTGSKGNFNTKIVYVSESNSSKGKIRRIAIMDQDGANHNYITNGKNHVITPVFSPNNNQILYVSYHNKIPTVRIHDLNSGNNKILASFNGITFSPRFSPDGNKILVSNSSTKNVTHIYEINLLTGKIKQLTKGQSINTSPSYSPDGSKIAFVSDRSGSTQIYIMNDQGGNIKRLTSQPGAYTTPAWSPTNNYIAFTKIEAGEFSIGVIKLDGSNKRIIATKHLVEGPSWAPDGKTIIFSRAYKATKSTSTKVKLYSVDCTGYNEREIQTPENASDPNWSNEYE.

The signal sequence occupies residues 1-31 (MINNLSISMTKVIKIILAIIIILFNTLSIFA).

This sequence belongs to the TolB family. As to quaternary structure, the Tol-Pal system is composed of five core proteins: the inner membrane proteins TolA, TolQ and TolR, the periplasmic protein TolB and the outer membrane protein Pal. They form a network linking the inner and outer membranes and the peptidoglycan layer.

The protein resides in the periplasm. Functionally, part of the Tol-Pal system, which plays a role in outer membrane invagination during cell division and is important for maintaining outer membrane integrity. This chain is Tol-Pal system protein TolB, found in Orientia tsutsugamushi (strain Ikeda) (Rickettsia tsutsugamushi).